The chain runs to 156 residues: uncharacterized protein (156 aa).

5 consecutive transmembrane segments (helical) span residues 7-29 (AQIS…SYFL), 42-64 (YFAL…PYLF), 69-88 (AVTG…AITS), 98-120 (AAIW…YPAL), and 133-155 (ALVL…ISRI).

It is found in the cell membrane. This is an uncharacterized protein from Pasteurella multocida (strain Pm70).